The chain runs to 156 residues: MSRRNAAVKRPILPDPQFNSRLATMMVARLMQHGKKSTAQRILSDAFGLINERTGGDPLELFETAVKNATPLVEVRARRVGGATYQVPMEVRQERGTAMALRWLVSFSRARNGRSMSQKLAGELMDAANEAGSAVRKREETHKMAEANKAFAHYRY.

It belongs to the universal ribosomal protein uS7 family. In terms of assembly, part of the 30S ribosomal subunit. Contacts proteins S9 and S11.

One of the primary rRNA binding proteins, it binds directly to 16S rRNA where it nucleates assembly of the head domain of the 30S subunit. Is located at the subunit interface close to the decoding center, probably blocks exit of the E-site tRNA. This chain is Small ribosomal subunit protein uS7, found in Synechococcus sp. (strain CC9902).